The primary structure comprises 795 residues: Endoplasmin (795 aa).

Residues 1 to 21 (MKSAWALALACTLLLAASVTA) form the signal peptide. The SRT pseudosubstrate motif signature appears at 41–43 (SRT). Residues N61 and N106 are each glycosylated (N-linked (GlcNAc...) asparagine). ATP contacts are provided by N106, D148, N161, and F198. The N-linked (GlcNAc...) asparagine glycan is linked to N216. The span at 289–316 (EEPVEEEEAKEEKEETDDNEAAVEEEEE) shows a compositional bias: acidic residues. Positions 289 to 322 (EEPVEEEEAKEEKEETDDNEAAVEEEEEEKKPKT) are disordered. N-linked (GlcNAc...) asparagine glycosylation is found at N444, N480, and N501. Positions 751-795 (DAKVEEEPEEPEDAAEEAEQDEEEVDADAEDSETQKESTDVKDEL) are disordered. Residues 756–782 (EEPEEPEDAAEEAEQDEEEVDADAEDS) are compositionally biased toward acidic residues. Residues 783–795 (ETQKESTDVKDEL) show a composition bias toward basic and acidic residues. The short motif at 792–795 (KDEL) is the Prevents secretion from ER element.

The protein belongs to the heat shock protein 90 family. Homodimer; disulfide-linked.

It localises to the endoplasmic reticulum lumen. It is found in the sarcoplasmic reticulum lumen. The enzyme catalyses ATP + H2O = ADP + phosphate + H(+). Functionally, ATP-dependent chaperone involved in the processing of proteins in the endoplasmic reticulum, regulating their transport. The protein is Endoplasmin (HSP90B1) of Gallus gallus (Chicken).